The chain runs to 147 residues: Leghemoglobin-1 (147 aa).

In terms of domain architecture, Globin spans 2-147; sequence SFTDKQEALV…LATAIKKAMS (146 aa). A nitrated tyrosine mark is found at Tyr-25 and Tyr-30. Position 45 (Ser-45) interacts with heme b. Phosphoserine is present on Ser-45. Residue His-62 participates in O2 binding. Positions 65, 94, and 97 each coordinate heme b. At Tyr-135 the chain carries Nitrated tyrosine.

Belongs to the plant globin family. In terms of assembly, monomer. Post-translationally, nitrated in effective nodules and particularly in hypoxic conditions; this mechanism may play a protective role in the symbiosis by buffering toxic peroxynitrite NO(2)(-). Nitration level decrease during nodule senescence. Phosphorylation at Ser-45 disrupts the molecular environment of its porphyrin ring oxygen binding pocket, thus leading to a reduced oxygen consumption and to the delivery of oxygen O(2) to symbiosomes. In terms of tissue distribution, root nodules.

The protein localises to the cytoplasm. It localises to the cytosol. It is found in the nucleus. In terms of biological role, leghemoglobin that reversibly binds oxygen O(2) through a pentacoordinated heme iron. In root nodules, facilitates the diffusion of oxygen to the bacteroids while preventing the bacterial nitrogenase from being inactivated by buffering dioxygen, nitric oxide and carbon monoxide, and promoting the formation of reactive oxygen species (ROS, e.g. H(2)O(2)). This role is essential for symbiotic nitrogen fixation (SNF). The protein is Leghemoglobin-1 of Medicago sativa (Alfalfa).